A 511-amino-acid chain; its full sequence is Bifunctional purine biosynthesis protein PurH (511 aa).

The 145-residue stretch at 1–145 (MKKRALVSVS…KNHKFVSVIV (145 aa)) folds into the MGS-like domain.

This sequence belongs to the PurH family.

It catalyses the reaction (6R)-10-formyltetrahydrofolate + 5-amino-1-(5-phospho-beta-D-ribosyl)imidazole-4-carboxamide = 5-formamido-1-(5-phospho-D-ribosyl)imidazole-4-carboxamide + (6S)-5,6,7,8-tetrahydrofolate. The catalysed reaction is IMP + H2O = 5-formamido-1-(5-phospho-D-ribosyl)imidazole-4-carboxamide. Its pathway is purine metabolism; IMP biosynthesis via de novo pathway; 5-formamido-1-(5-phospho-D-ribosyl)imidazole-4-carboxamide from 5-amino-1-(5-phospho-D-ribosyl)imidazole-4-carboxamide (10-formyl THF route): step 1/1. It participates in purine metabolism; IMP biosynthesis via de novo pathway; IMP from 5-formamido-1-(5-phospho-D-ribosyl)imidazole-4-carboxamide: step 1/1. This chain is Bifunctional purine biosynthesis protein PurH, found in Bacillus cereus (strain ATCC 10987 / NRS 248).